The primary structure comprises 455 residues: Bifunctional protein GlmU (455 aa).

The tract at residues 1-226 (MGLSVVILAA…EFEILGVNDR (226 aa)) is pyrophosphorylase. Residues 8–11 (LAAG), Lys22, Gln73, 78–79 (GT), 99–101 (YGD), Gly136, Glu151, Asn166, and Asn224 each bind UDP-N-acetyl-alpha-D-glucosamine. A Mg(2+)-binding site is contributed by Asp101. Asn224 is a binding site for Mg(2+). The linker stretch occupies residues 227–247 (TQLASLERVWQRNVAEKIMAK). The tract at residues 248–455 (GVSIADPNRF…WQRPVKKTDK (208 aa)) is N-acetyltransferase. Positions 330 and 348 each coordinate UDP-N-acetyl-alpha-D-glucosamine. His360 serves as the catalytic Proton acceptor. UDP-N-acetyl-alpha-D-glucosamine contacts are provided by Tyr363 and Asn374. Residues Ala377, 383–384 (NY), Ser402, Ala420, and Arg437 contribute to the acetyl-CoA site.

In the N-terminal section; belongs to the N-acetylglucosamine-1-phosphate uridyltransferase family. The protein in the C-terminal section; belongs to the transferase hexapeptide repeat family. Homotrimer. It depends on Mg(2+) as a cofactor.

It localises to the cytoplasm. It carries out the reaction alpha-D-glucosamine 1-phosphate + acetyl-CoA = N-acetyl-alpha-D-glucosamine 1-phosphate + CoA + H(+). The catalysed reaction is N-acetyl-alpha-D-glucosamine 1-phosphate + UTP + H(+) = UDP-N-acetyl-alpha-D-glucosamine + diphosphate. The protein operates within nucleotide-sugar biosynthesis; UDP-N-acetyl-alpha-D-glucosamine biosynthesis; N-acetyl-alpha-D-glucosamine 1-phosphate from alpha-D-glucosamine 6-phosphate (route II): step 2/2. It participates in nucleotide-sugar biosynthesis; UDP-N-acetyl-alpha-D-glucosamine biosynthesis; UDP-N-acetyl-alpha-D-glucosamine from N-acetyl-alpha-D-glucosamine 1-phosphate: step 1/1. Its pathway is bacterial outer membrane biogenesis; LPS lipid A biosynthesis. In terms of biological role, catalyzes the last two sequential reactions in the de novo biosynthetic pathway for UDP-N-acetylglucosamine (UDP-GlcNAc). The C-terminal domain catalyzes the transfer of acetyl group from acetyl coenzyme A to glucosamine-1-phosphate (GlcN-1-P) to produce N-acetylglucosamine-1-phosphate (GlcNAc-1-P), which is converted into UDP-GlcNAc by the transfer of uridine 5-monophosphate (from uridine 5-triphosphate), a reaction catalyzed by the N-terminal domain. The protein is Bifunctional protein GlmU of Francisella tularensis subsp. novicida (strain U112).